Reading from the N-terminus, the 182-residue chain is Bifunctional dihydrofolate reductase-thymidylate synthase (182 aa).

Positions 1–182 (AICACCKVLN…YFTRINNAYT (182 aa)) constitute a DHFR domain. 25–31 (GLGNAGG) lines the NADP(+) pocket. Position 40 (aspartate 40) interacts with substrate. Residues 93-95 (KTS) and 114-117 (LSRT) each bind NADP(+). Substrate is bound by residues isoleucine 154, tyrosine 160, and threonine 175. 155-162 (GGASVYKE) contacts NADP(+).

In the N-terminal section; belongs to the dihydrofolate reductase family. The protein in the C-terminal section; belongs to the thymidylate synthase family. In terms of assembly, homodimer.

It carries out the reaction (6S)-5,6,7,8-tetrahydrofolate + NADP(+) = 7,8-dihydrofolate + NADPH + H(+). It catalyses the reaction dUMP + (6R)-5,10-methylene-5,6,7,8-tetrahydrofolate = 7,8-dihydrofolate + dTMP. It functions in the pathway cofactor biosynthesis; tetrahydrofolate biosynthesis; 5,6,7,8-tetrahydrofolate from 7,8-dihydrofolate: step 1/1. In terms of biological role, bifunctional enzyme. Involved in de novo dTMP biosynthesis. Key enzyme in folate metabolism. Catalyzes an essential reaction for de novo glycine and purine synthesis, DNA precursor synthesis, and for the conversion of dUMP to dTMP. This is Bifunctional dihydrofolate reductase-thymidylate synthase from Plasmodium vinckei.